A 319-amino-acid chain; its full sequence is Beta-ketoacyl-[acyl-carrier-protein] synthase III (319 aa).

Active-site residues include Cys112 and His246. Residues 247 to 251 (QANKR) form an ACP-binding region. Asn276 is a catalytic residue.

The protein belongs to the thiolase-like superfamily. FabH family. As to quaternary structure, homodimer.

The protein localises to the cytoplasm. It catalyses the reaction malonyl-[ACP] + acetyl-CoA + H(+) = 3-oxobutanoyl-[ACP] + CO2 + CoA. It functions in the pathway lipid metabolism; fatty acid biosynthesis. Its function is as follows. Catalyzes the condensation reaction of fatty acid synthesis by the addition to an acyl acceptor of two carbons from malonyl-ACP. Catalyzes the first condensation reaction which initiates fatty acid synthesis and may therefore play a role in governing the total rate of fatty acid production. Possesses both acetoacetyl-ACP synthase and acetyl transacylase activities. Its substrate specificity determines the biosynthesis of branched-chain and/or straight-chain of fatty acids. This Psychromonas ingrahamii (strain DSM 17664 / CCUG 51855 / 37) protein is Beta-ketoacyl-[acyl-carrier-protein] synthase III.